Here is a 633-residue protein sequence, read N- to C-terminus: ATP-dependent clpX-like chaperone, mitochondrial (633 aa).

A mitochondrion-targeting transit peptide spans 1–56 (MSSCGACTCGAAAARLLTTSLTSAQRGISCGRIHVPVLGRLGTLDTQILRRAPLRT). Residues 65 to 101 (ASKDGTNKDGSGDGNKKSVTEGSSKKSGSGNSGKGGN) form a disordered region. Positions 69–83 (GTNKDGSGDGNKKSV) are enriched in basic and acidic residues. Over residues 84–93 (TEGSSKKSGS) the composition is skewed to low complexity. The ClpX-type ZB domain occupies 93-146 (SGNSGKGGNQLRCPKCGDLCTHVETFVSSTRFVKCEKCHHFFVVLSEADSKKSI). 4 residues coordinate Zn(2+): C105, C108, C127, and C130. 294 to 301 (PTGSGKTL) provides a ligand contact to ATP. Position 437 is an N6-acetyllysine (K437). The segment covering 598–610 (KEPGYIRAPSKES) has biased composition (basic and acidic residues). The disordered stretch occupies residues 598-633 (KEPGYIRAPSKESSEEDYDSGVEEDGWPRQADAANS). The span at 611–622 (SEEDYDSGVEED) shows a compositional bias: acidic residues. S617 bears the Phosphoserine mark.

This sequence belongs to the ClpX chaperone family. Homohexamer that forms a ring structure; this hexamerization requires ATP binding. Component of the ClpXP complex formed by the assembly of two CLPP heptameric rings with two CLPX hexameric rings, giving rise to a symmetrical structure with two central CLPP rings flanked by a CLPX ring at either end of the complex. Interacts with TFAM.

Its subcellular location is the mitochondrion. The protein resides in the mitochondrion matrix. It is found in the mitochondrion nucleoid. The enzyme catalyses ATP + H2O = ADP + phosphate + H(+). ATP-dependent chaperone that functions as an unfoldase. As part of the ClpXP protease complex, it recognizes specific protein substrates, unfolds them using energy derived from ATP hydrolysis, and then translocates them to the proteolytic subunit (CLPP) of the ClpXP complex for degradation. Thanks to its chaperone activity, it also functions in the incorporation of the pyridoxal phosphate cofactor into 5-aminolevulinate synthase, thereby activating 5-aminolevulinate (ALA) synthesis, the first step in heme biosynthesis. This chaperone is also involved in the control of mtDNA nucleoid distribution, by regulating mitochondrial transcription factor A (TFAM) activity. The sequence is that of ATP-dependent clpX-like chaperone, mitochondrial from Rattus norvegicus (Rat).